The following is a 195-amino-acid chain: dITP/XTP pyrophosphatase (195 aa).

Residue 9–14 (TGNKGK) participates in substrate binding. Glutamate 41 and aspartate 70 together coordinate Mg(2+). The Proton acceptor role is filled by aspartate 70. Residues serine 71, 155 to 158 (FGYD), lysine 178, and 183 to 184 (HR) contribute to the substrate site.

The protein belongs to the HAM1 NTPase family. As to quaternary structure, homodimer. The cofactor is Mg(2+).

It carries out the reaction XTP + H2O = XMP + diphosphate + H(+). The enzyme catalyses dITP + H2O = dIMP + diphosphate + H(+). The catalysed reaction is ITP + H2O = IMP + diphosphate + H(+). Its function is as follows. Pyrophosphatase that catalyzes the hydrolysis of nucleoside triphosphates to their monophosphate derivatives, with a high preference for the non-canonical purine nucleotides XTP (xanthosine triphosphate), dITP (deoxyinosine triphosphate) and ITP. Seems to function as a house-cleaning enzyme that removes non-canonical purine nucleotides from the nucleotide pool, thus preventing their incorporation into DNA/RNA and avoiding chromosomal lesions. In Haemophilus influenzae (strain ATCC 51907 / DSM 11121 / KW20 / Rd), this protein is dITP/XTP pyrophosphatase.